We begin with the raw amino-acid sequence, 687 residues long: DNA ligase (687 aa).

Residues 34-38, 83-84, and Glu-117 contribute to the NAD(+) site; these read DAEYD and SL. Residue Lys-119 is the N6-AMP-lysine intermediate of the active site. Arg-140, Glu-182, Lys-298, and Lys-322 together coordinate NAD(+). Residues Cys-416, Cys-419, Cys-434, and Cys-439 each coordinate Zn(2+). A BRCT domain is found at 609-687; the sequence is EARGPFAGKT…EEEFVRLLKE (79 aa).

This sequence belongs to the NAD-dependent DNA ligase family. LigA subfamily. Mg(2+) serves as cofactor. The cofactor is Mn(2+).

It carries out the reaction NAD(+) + (deoxyribonucleotide)n-3'-hydroxyl + 5'-phospho-(deoxyribonucleotide)m = (deoxyribonucleotide)n+m + AMP + beta-nicotinamide D-nucleotide.. Its function is as follows. DNA ligase that catalyzes the formation of phosphodiester linkages between 5'-phosphoryl and 3'-hydroxyl groups in double-stranded DNA using NAD as a coenzyme and as the energy source for the reaction. It is essential for DNA replication and repair of damaged DNA. This chain is DNA ligase, found in Anaeromyxobacter dehalogenans (strain 2CP-C).